Here is a 407-residue protein sequence, read N- to C-terminus: Obg-like ATPase homolog (407 aa).

The 256-residue stretch at 46-301 (LKIGIVGMPN…LTPEEAAQEC (256 aa)) folds into the OBG-type G domain. ATP is bound by residues 55–60 (NIGKST) and M249. In terms of domain architecture, TGS spans 322–405 (NLIHYFTASE…EPGDIIFWKI (84 aa)).

The protein belongs to the TRAFAC class OBG-HflX-like GTPase superfamily. OBG GTPase family.

In terms of biological role, hydrolyzes ATP, and can also hydrolyze GTP with lower efficiency. Has lower affinity for GTP. The protein is Obg-like ATPase homolog of Schizosaccharomyces pombe (strain 972 / ATCC 24843) (Fission yeast).